A 73-amino-acid chain; its full sequence is UPF0235 protein PERMA_1406 (73 aa).

It belongs to the UPF0235 family.

This Persephonella marina (strain DSM 14350 / EX-H1) protein is UPF0235 protein PERMA_1406.